The chain runs to 124 residues: ATP synthase subunit H, mitochondrial (124 aa).

Residues 1–32 (MFPIASRRILLNASVLPLRLCNRNFTTTRISY) constitute a mitochondrion transit peptide. Positions 89 to 124 (NVETAHVAKESEEGESEPIEEDWLVLDDAEETKESH) are disordered. Residues 100-124 (EEGESEPIEEDWLVLDDAEETKESH) are compositionally biased toward acidic residues.

Belongs to the ATPase h subunit family. As to quaternary structure, F-type ATPases have 2 components, CF(1) - the catalytic core - and CF(0) - the membrane proton channel. In yeast, the dimeric form of ATP synthase consists of 17 polypeptides: alpha, beta, gamma, delta, epsilon, 4 (B), 5 (OSCP), 6 (A), 8, 9 (C), d, E (Tim11), f, g, h, i/j and k.

It is found in the mitochondrion. Its subcellular location is the mitochondrion inner membrane. In terms of biological role, mitochondrial membrane ATP synthase (F(1)F(0) ATP synthase or Complex V) produces ATP from ADP in the presence of a proton gradient across the membrane which is generated by electron transport complexes of the respiratory chain. F-type ATPases consist of two structural domains, F(1) - containing the extramembraneous catalytic core and F(0) - containing the membrane proton channel, linked together by a central stalk and a peripheral stalk. During catalysis, ATP synthesis in the catalytic domain of F(1) is coupled via a rotary mechanism of the central stalk subunits to proton translocation. Part of the complex F(0) domain. Minor subunit located with subunit a in the membrane. The sequence is that of ATP synthase subunit H, mitochondrial (ATP14) from Saccharomyces cerevisiae (strain ATCC 204508 / S288c) (Baker's yeast).